A 145-amino-acid polypeptide reads, in one-letter code: MGPWPRDWLGKGWRLGSCEARAGAKEVSVIRHGAPNPAQSHLHVQARAQVHSEDGHSLPPVVDGEDEVLSLLVFVQDSQECCRQAVQGRQGRGVTWGLGLPSYHLRTLLSPVCVPARDQRAPRKCCEAVLACPLVETLVTTLLTR.

This is an uncharacterized protein from Homo sapiens (Human).